Consider the following 322-residue polypeptide: NADH-quinone oxidoreductase subunit H (322 aa).

8 helical membrane-spanning segments follow: residues V12–I32, I79–P99, V111–G131, L151–F171, L183–V203, F234–F254, L262–L282, and V301–V321.

Belongs to the complex I subunit 1 family. As to quaternary structure, NDH-1 is composed of 14 different subunits. Subunits NuoA, H, J, K, L, M, N constitute the membrane sector of the complex.

The protein resides in the cell inner membrane. The enzyme catalyses a quinone + NADH + 5 H(+)(in) = a quinol + NAD(+) + 4 H(+)(out). Functionally, NDH-1 shuttles electrons from NADH, via FMN and iron-sulfur (Fe-S) centers, to quinones in the respiratory chain. The immediate electron acceptor for the enzyme in this species is believed to be ubiquinone. Couples the redox reaction to proton translocation (for every two electrons transferred, four hydrogen ions are translocated across the cytoplasmic membrane), and thus conserves the redox energy in a proton gradient. This subunit may bind ubiquinone. The sequence is that of NADH-quinone oxidoreductase subunit H from Aeromonas salmonicida (strain A449).